Reading from the N-terminus, the 915-residue chain is Protein translocase subunit SecA (915 aa).

Residues Gln87, 105–109, and Asp512 contribute to the ATP site; that span reads GEGKT. The tract at residues 881-915 is disordered; the sequence is LPGTAPVRPEPKIGRNEPCPCGSGKKYKHCHGQLN. Cys899, Cys901, Cys910, and His911 together coordinate Zn(2+). The segment covering 905–915 has biased composition (basic residues); the sequence is KKYKHCHGQLN.

This sequence belongs to the SecA family. In terms of assembly, monomer and homodimer. Part of the essential Sec protein translocation apparatus which comprises SecA, SecYEG and auxiliary proteins SecDF-YajC and YidC. Requires Zn(2+) as cofactor.

It is found in the cell inner membrane. The protein localises to the cytoplasm. The catalysed reaction is ATP + H2O + cellular proteinSide 1 = ADP + phosphate + cellular proteinSide 2.. Its function is as follows. Part of the Sec protein translocase complex. Interacts with the SecYEG preprotein conducting channel. Has a central role in coupling the hydrolysis of ATP to the transfer of proteins into and across the cell membrane, serving both as a receptor for the preprotein-SecB complex and as an ATP-driven molecular motor driving the stepwise translocation of polypeptide chains across the membrane. The polypeptide is Protein translocase subunit SecA (Azotobacter vinelandii (strain DJ / ATCC BAA-1303)).